The sequence spans 415 residues: Serine hydroxymethyltransferase (415 aa).

(6S)-5,6,7,8-tetrahydrofolate is bound by residues leucine 117 and 121 to 123 (GHL). At lysine 225 the chain carries N6-(pyridoxal phosphate)lysine. 349 to 351 (SPF) provides a ligand contact to (6S)-5,6,7,8-tetrahydrofolate.

This sequence belongs to the SHMT family. As to quaternary structure, homodimer. The cofactor is pyridoxal 5'-phosphate.

The protein resides in the cytoplasm. It catalyses the reaction (6R)-5,10-methylene-5,6,7,8-tetrahydrofolate + glycine + H2O = (6S)-5,6,7,8-tetrahydrofolate + L-serine. It functions in the pathway one-carbon metabolism; tetrahydrofolate interconversion. The protein operates within amino-acid biosynthesis; glycine biosynthesis; glycine from L-serine: step 1/1. Functionally, catalyzes the reversible interconversion of serine and glycine with tetrahydrofolate (THF) serving as the one-carbon carrier. This reaction serves as the major source of one-carbon groups required for the biosynthesis of purines, thymidylate, methionine, and other important biomolecules. Also exhibits THF-independent aldolase activity toward beta-hydroxyamino acids, producing glycine and aldehydes, via a retro-aldol mechanism. This chain is Serine hydroxymethyltransferase, found in Nitratiruptor sp. (strain SB155-2).